The following is a 287-amino-acid chain: 4-diphosphocytidyl-2-C-methyl-D-erythritol kinase (287 aa).

The active site involves K12. 95–105 (PAQAGMGGGSS) is a binding site for ATP. D137 is a catalytic residue.

This sequence belongs to the GHMP kinase family. IspE subfamily.

It carries out the reaction 4-CDP-2-C-methyl-D-erythritol + ATP = 4-CDP-2-C-methyl-D-erythritol 2-phosphate + ADP + H(+). It functions in the pathway isoprenoid biosynthesis; isopentenyl diphosphate biosynthesis via DXP pathway; isopentenyl diphosphate from 1-deoxy-D-xylulose 5-phosphate: step 3/6. Catalyzes the phosphorylation of the position 2 hydroxy group of 4-diphosphocytidyl-2C-methyl-D-erythritol. The chain is 4-diphosphocytidyl-2-C-methyl-D-erythritol kinase from Delftia acidovorans (strain DSM 14801 / SPH-1).